A 361-amino-acid chain; its full sequence is Protein RecA (361 aa).

Residue 68 to 75 (GPESSGKT) participates in ATP binding. Residues 342–361 (PEGAKENISAKDDVAVDTKE) form a disordered region. A compositionally biased stretch (basic and acidic residues) spans 344 to 361 (GAKENISAKDDVAVDTKE).

It belongs to the RecA family.

Its subcellular location is the cytoplasm. Can catalyze the hydrolysis of ATP in the presence of single-stranded DNA, the ATP-dependent uptake of single-stranded DNA by duplex DNA, and the ATP-dependent hybridization of homologous single-stranded DNAs. It interacts with LexA causing its activation and leading to its autocatalytic cleavage. The sequence is that of Protein RecA from Clostridium beijerinckii (strain ATCC 51743 / NCIMB 8052) (Clostridium acetobutylicum).